Consider the following 145-residue polypeptide: Superoxide dismutase [Mn/Fe] (145 aa).

The Fe(3+) site is built by histidine 10 and histidine 64. Histidine 10 and histidine 64 together coordinate Mn(2+).

It belongs to the iron/manganese superoxide dismutase family. It depends on Mn(2+) as a cofactor. Fe(3+) serves as cofactor.

It carries out the reaction 2 superoxide + 2 H(+) = H2O2 + O2. Its function is as follows. Destroys superoxide anion radicals which are normally produced within the cells and which are toxic to biological systems. Catalyzes the dismutation of superoxide anion radicals into O2 and H2O2 by successive reduction and oxidation of the transition metal ion at the active site. The sequence is that of Superoxide dismutase [Mn/Fe] (sodA) from Streptococcus parasanguinis.